The following is a 223-amino-acid chain: Urease accessory protein UreF (223 aa).

It belongs to the UreF family. As to quaternary structure, ureD, UreF and UreG form a complex that acts as a GTP-hydrolysis-dependent molecular chaperone, activating the urease apoprotein by helping to assemble the nickel containing metallocenter of UreC. The UreE protein probably delivers the nickel.

The protein localises to the cytoplasm. Its function is as follows. Required for maturation of urease via the functional incorporation of the urease nickel metallocenter. The protein is Urease accessory protein UreF of Pseudomonas aeruginosa (strain LESB58).